We begin with the raw amino-acid sequence, 225 residues long: C-reactive protein (225 aa).

The signal sequence occupies residues 1-18 (MLVVFLCLLSVTLEATEG). In terms of domain architecture, Pentraxin (PTX) spans 23–225 (SGKVLQFKTA…TGNVLVATDN (203 aa)). Cys-54 and Cys-116 are disulfide-bonded. Ca(2+) is bound by residues Asp-78, Asp-157, Pro-158, Asp-159, and Gln-169.

Belongs to the pentraxin family. Homotrimer. Requires Ca(2+) as cofactor.

It localises to the secreted. In terms of biological role, displays several functions associated with host defense: it promotes agglutination, bacterial capsular swelling, phagocytosis, and complement fixation through its calcium-dependent binding to phosphorylcholine. The polypeptide is C-reactive protein (Danio rerio (Zebrafish)).